Consider the following 384-residue polypeptide: Acetylornithine aminotransferase (384 aa).

Pyridoxal 5'-phosphate contacts are provided by residues G95–A96 and F122. R125 is a N(2)-acetyl-L-ornithine binding site. Pyridoxal 5'-phosphate is bound at residue D207–Q210. K236 is subject to N6-(pyridoxal phosphate)lysine. S264 is a binding site for N(2)-acetyl-L-ornithine. T265 serves as a coordination point for pyridoxal 5'-phosphate.

This sequence belongs to the class-III pyridoxal-phosphate-dependent aminotransferase family. ArgD subfamily. In terms of assembly, homodimer. The cofactor is pyridoxal 5'-phosphate.

It localises to the cytoplasm. It catalyses the reaction N(2)-acetyl-L-ornithine + 2-oxoglutarate = N-acetyl-L-glutamate 5-semialdehyde + L-glutamate. It participates in amino-acid biosynthesis; L-arginine biosynthesis; N(2)-acetyl-L-ornithine from L-glutamate: step 4/4. In Halalkalibacterium halodurans (strain ATCC BAA-125 / DSM 18197 / FERM 7344 / JCM 9153 / C-125) (Bacillus halodurans), this protein is Acetylornithine aminotransferase.